We begin with the raw amino-acid sequence, 76 residues long: Conopeptide X11.1 (76 aa).

Residues 1–20 (MMKLSVSFLLLLMLLPFITG) form the signal peptide. The propeptide occupies 21-39 (EENSDSDVLKSGAAVRQGR). Disulfide bonds link Cys-42–Cys-56, Cys-49–Cys-61, Cys-55–Cys-66, and Cys-60–Cys-73.

Expressed by the venom duct.

The protein localises to the secreted. In terms of biological role, antimicrobial peptide that potently inhibits growth of Mycobacterium tuberculosis (H37Rv strain) (MIC=3 uM). The sequence is that of Conopeptide X11.1 from Conasprella ximenes (Interrupted cone).